We begin with the raw amino-acid sequence, 152 residues long: Prefoldin subunit alpha (152 aa).

The disordered stretch occupies residues 110–152 (ETQEEVDELESESQELEQQAQQMQQQMQQQQMQQMQQSQGDEE). Over residues 111–124 (TQEEVDELESESQE) the composition is skewed to acidic residues. Residues 125–152 (LEQQAQQMQQQMQQQQMQQMQQSQGDEE) show a composition bias toward low complexity.

Belongs to the prefoldin alpha subunit family. Heterohexamer of two alpha and four beta subunits.

It is found in the cytoplasm. Functionally, molecular chaperone capable of stabilizing a range of proteins. Seems to fulfill an ATP-independent, HSP70-like function in archaeal de novo protein folding. This is Prefoldin subunit alpha from Halorubrum lacusprofundi (strain ATCC 49239 / DSM 5036 / JCM 8891 / ACAM 34).